The chain runs to 179 residues: Large ribosomal subunit protein uL5 (179 aa).

Belongs to the universal ribosomal protein uL5 family. Part of the 50S ribosomal subunit; part of the 5S rRNA/L5/L18/L25 subcomplex. Contacts the 5S rRNA and the P site tRNA. Forms a bridge to the 30S subunit in the 70S ribosome.

This is one of the proteins that bind and probably mediate the attachment of the 5S RNA into the large ribosomal subunit, where it forms part of the central protuberance. In the 70S ribosome it contacts protein S13 of the 30S subunit (bridge B1b), connecting the 2 subunits; this bridge is implicated in subunit movement. Contacts the P site tRNA; the 5S rRNA and some of its associated proteins might help stabilize positioning of ribosome-bound tRNAs. This chain is Large ribosomal subunit protein uL5, found in Pseudomonas savastanoi pv. phaseolicola (strain 1448A / Race 6) (Pseudomonas syringae pv. phaseolicola (strain 1448A / Race 6)).